Consider the following 393-residue polypeptide: CCCH-type zinc finger protein oma-2 (393 aa).

Residues 1–26 (MDMLKENVIQNNEARTESSVEPSHPD) form a disordered region. A compositionally biased stretch (basic and acidic residues) spans 14–26 (ARTESSVEPSHPD). 2 consecutive C3H1-type zinc fingers follow at residues 105 to 133 (SYKTVICQAWLESKTCAFAENCRFAHGEE) and 147 to 175 (KYRTKLCDKYTTTGLCPYGKRCLFIHPDN). Disordered regions lie at residues 227–251 (TPDEPAANMPLGPTPVSIRGPRYEL) and 311–340 (KQSTPGGVSGYSSSGSTPSQDSDSSPLTAA). Residues 313–340 (STPGGVSGYSSSGSTPSQDSDSSPLTAA) are compositionally biased toward low complexity. Thr-327 is subject to Phosphothreonine; by GSK3.

In terms of tissue distribution, exclusively expressed in the hermaphrodite gonad. Expression only in cellulized oocytes. Widely distributed throughout gonadal oocytes from the mitotic stage to the developing diakinesis stage.

It is found in the cytoplasm. It localises to the cytoplasmic granule. Its subcellular location is the cytoskeleton. The protein resides in the microtubule organizing center. The protein localises to the centrosome. In terms of biological role, zinc-finger RNA-binding protein that binds to 5'-UA[AU]-3' motifs in the 3'-UTR of maternal mRNAs to suppress translation in oocytes and embryos. Acts redundantly with oma-1 to control the temporal expression and distribution of maternal proteins and thereby promote meiotic progression, oocyte maturation, fertilization and embryonic development. Also, together with oma-1, is involved in P-granule distribution during embryonic development. The sequence is that of CCCH-type zinc finger protein oma-2 from Caenorhabditis elegans.